Consider the following 521-residue polypeptide: Bifunctional purine biosynthesis protein PurH (521 aa).

One can recognise an MGS-like domain in the interval 1–147 (MGEITRALIS…KNWEGVTVLV (147 aa)).

The protein belongs to the PurH family.

The enzyme catalyses (6R)-10-formyltetrahydrofolate + 5-amino-1-(5-phospho-beta-D-ribosyl)imidazole-4-carboxamide = 5-formamido-1-(5-phospho-D-ribosyl)imidazole-4-carboxamide + (6S)-5,6,7,8-tetrahydrofolate. It catalyses the reaction IMP + H2O = 5-formamido-1-(5-phospho-D-ribosyl)imidazole-4-carboxamide. It participates in purine metabolism; IMP biosynthesis via de novo pathway; 5-formamido-1-(5-phospho-D-ribosyl)imidazole-4-carboxamide from 5-amino-1-(5-phospho-D-ribosyl)imidazole-4-carboxamide (10-formyl THF route): step 1/1. It functions in the pathway purine metabolism; IMP biosynthesis via de novo pathway; IMP from 5-formamido-1-(5-phospho-D-ribosyl)imidazole-4-carboxamide: step 1/1. This Acidithiobacillus ferrooxidans (strain ATCC 53993 / BNL-5-31) (Leptospirillum ferrooxidans (ATCC 53993)) protein is Bifunctional purine biosynthesis protein PurH.